Consider the following 95-residue polypeptide: Translation initiation factor IF-1 (95 aa).

Residues 1–72 form the S1-like domain; sequence MAKEELIEMD…TKARITYRHK (72 aa). Positions 70–95 are disordered; sequence RHKVGGPPGPVTGGGNRPPPRQPRRR. Over residues 86–95 the composition is skewed to pro residues; it reads RPPPRQPRRR.

It belongs to the IF-1 family. In terms of assembly, component of the 30S ribosomal translation pre-initiation complex which assembles on the 30S ribosome in the order IF-2 and IF-3, IF-1 and N-formylmethionyl-tRNA(fMet); mRNA recruitment can occur at any time during PIC assembly.

Its subcellular location is the cytoplasm. One of the essential components for the initiation of protein synthesis. Stabilizes the binding of IF-2 and IF-3 on the 30S subunit to which N-formylmethionyl-tRNA(fMet) subsequently binds. Helps modulate mRNA selection, yielding the 30S pre-initiation complex (PIC). Upon addition of the 50S ribosomal subunit IF-1, IF-2 and IF-3 are released leaving the mature 70S translation initiation complex. The polypeptide is Translation initiation factor IF-1 (Rhodospirillum rubrum (strain ATCC 11170 / ATH 1.1.1 / DSM 467 / LMG 4362 / NCIMB 8255 / S1)).